A 191-amino-acid chain; its full sequence is Protein Ves (191 aa).

Belongs to the Ves family.

This Escherichia coli O7:K1 (strain IAI39 / ExPEC) protein is Protein Ves.